The chain runs to 364 residues: Probable dual-specificity RNA methyltransferase RlmN (364 aa).

E107 acts as the Proton acceptor in catalysis. Residues 113–346 enclose the Radical SAM core domain; the sequence is HEYGNSVCVT…ATIRREQGSD (234 aa). Residues C120 and C351 are joined by a disulfide bond. [4Fe-4S] cluster-binding residues include C127, C131, and C134. Residues 177–178, S209, 232–234, and N308 each bind S-adenosyl-L-methionine; these read GE and SLH. Catalysis depends on C351, which acts as the S-methylcysteine intermediate.

Belongs to the radical SAM superfamily. RlmN family. [4Fe-4S] cluster serves as cofactor.

It is found in the cytoplasm. It carries out the reaction adenosine(2503) in 23S rRNA + 2 reduced [2Fe-2S]-[ferredoxin] + 2 S-adenosyl-L-methionine = 2-methyladenosine(2503) in 23S rRNA + 5'-deoxyadenosine + L-methionine + 2 oxidized [2Fe-2S]-[ferredoxin] + S-adenosyl-L-homocysteine. The enzyme catalyses adenosine(37) in tRNA + 2 reduced [2Fe-2S]-[ferredoxin] + 2 S-adenosyl-L-methionine = 2-methyladenosine(37) in tRNA + 5'-deoxyadenosine + L-methionine + 2 oxidized [2Fe-2S]-[ferredoxin] + S-adenosyl-L-homocysteine. Functionally, specifically methylates position 2 of adenine 2503 in 23S rRNA and position 2 of adenine 37 in tRNAs. Confers resistance to some classes of antibiotics. The polypeptide is Probable dual-specificity RNA methyltransferase RlmN (Staphylococcus epidermidis (strain ATCC 35984 / DSM 28319 / BCRC 17069 / CCUG 31568 / BM 3577 / RP62A)).